The chain runs to 664 residues: DNA ligase (664 aa).

NAD(+) is bound by residues 32 to 36 (DKEYD) and 80 to 81 (SL). Lys122 serves as the catalytic N6-AMP-lysine intermediate. NAD(+) contacts are provided by Arg144, Glu178, and Lys314. Residues Cys407, Cys410, Cys423, and Cys429 each contribute to the Zn(2+) site. One can recognise a BRCT domain in the interval 587–664 (IDENPFMDKT…NEEEFSNKIK (78 aa)).

The protein belongs to the NAD-dependent DNA ligase family. LigA subfamily. It depends on Mg(2+) as a cofactor. The cofactor is Mn(2+).

It catalyses the reaction NAD(+) + (deoxyribonucleotide)n-3'-hydroxyl + 5'-phospho-(deoxyribonucleotide)m = (deoxyribonucleotide)n+m + AMP + beta-nicotinamide D-nucleotide.. Its function is as follows. DNA ligase that catalyzes the formation of phosphodiester linkages between 5'-phosphoryl and 3'-hydroxyl groups in double-stranded DNA using NAD as a coenzyme and as the energy source for the reaction. It is essential for DNA replication and repair of damaged DNA. The sequence is that of DNA ligase from Clostridium botulinum (strain Langeland / NCTC 10281 / Type F).